A 1909-amino-acid polypeptide reads, in one-letter code: Receptor-type tyrosine-protein phosphatase F (1909 aa).

The N-terminal stretch at 1–31 (MVPNTCTSVPLLPVGLPLLLLLSCIQFSSQA) is a signal peptide. Over 32-1266 (DSLPNFVRSP…RSVDQPEMLW (1235 aa)) the chain is Extracellular. Ig-like C2-type domains follow at residues 35–125 (PNFV…AKLT), 137–225 (PTID…ANLY), and 233–315 (PRFS…AQVS). Cysteines 56 and 109 form a disulfide. A heparin-binding site is contributed by 68 to 77 (WMKKGKKVSS). An N-linked (GlcNAc...) asparagine glycan is attached at asparagine 119. Cysteine 158 and cysteine 208 are joined by a disulfide. Asparagine 251 and asparagine 296 each carry an N-linked (GlcNAc...) asparagine glycan. The cysteines at positions 254 and 299 are disulfide-linked. Fibronectin type-III domains follow at residues 322–412 (PPTS…TGEQ), 417–511 (PPLH…TQQG), 515–604 (QPSS…TAQS), 609–706 (PPQD…TNED), 711–819 (PPRK…TTGA), 820–914 (VPGK…PEDV), 918–1013 (FPLN…TSPA), and 1014–1098 (FATS…TAPD). The segment at 399–418 (GPPSEPVETRTGEQAPSSPP) is disordered. An N-linked (GlcNAc...) asparagine glycan is attached at asparagine 721. N-linked (GlcNAc...) asparagine glycans are attached at residues asparagine 963 and asparagine 966. The chain crosses the membrane as a helical span at residues 1267–1287 (VMGPVLAVVLIIIIVIAILLF). Topologically, residues 1288–1909 (KRKRASPLPK…YLGSFDHYAT (622 aa)) are cytoplasmic. Tyrosine-protein phosphatase domains are found at residues 1354–1609 (FSQE…LLEA) and 1641–1900 (MELE…ALEY). Residues aspartate 1518, 1550 to 1556 (CSAGVGR), and glutamine 1594 each bind substrate. The Phosphocysteine intermediate role is filled by cysteine 1550. Cysteine 1841 functions as the Phosphocysteine intermediate in the catalytic mechanism.

This sequence belongs to the protein-tyrosine phosphatase family. Receptor class 2A subfamily.

The protein resides in the membrane. It catalyses the reaction O-phospho-L-tyrosyl-[protein] + H2O = L-tyrosyl-[protein] + phosphate. Its function is as follows. Possible cell adhesion receptor. It possesses an intrinsic protein tyrosine phosphatase activity (PTPase). The first PTPase domain has enzymatic activity, while the second one seems to affect the substrate specificity of the first one. This is Receptor-type tyrosine-protein phosphatase F (ptprf) from Danio rerio (Zebrafish).